The sequence spans 23 residues: Prolamin alpha-3 (23 aa).

This is Prolamin alpha-3 from Dactylis glomerata (Orchard grass).